The primary structure comprises 215 residues: FGFR1 oncogene partner 2 homolog (215 aa).

Coiled-coil stretches lie at residues 5 to 104 (IEKA…MSKY) and 161 to 185 (KEQE…ITRE). The interval 194-215 (DASESTSLSALVTNSDLSLRKN) is disordered. Residues 197–215 (ESTSLSALVTNSDLSLRKN) are compositionally biased toward polar residues.

It belongs to the SIKE family.

It localises to the cytoplasm. Functionally, may be involved in wound healing pathway. The protein is FGFR1 oncogene partner 2 homolog (FGFR1OP2) of Pongo abelii (Sumatran orangutan).